We begin with the raw amino-acid sequence, 350 residues long: MAATIWYEKDADLSVFDGKKVAILGYGSQGHAHALNLRDSGVDVVVGLRPTSKSVEFAKEQGLEVKPVGEAVAEADVVMILLPDQYQAAVYKKDVEPNLKPGAALAFAHGFNIHYGYIKPSEDHPVFMVAPKGPGHIVRREYAAGRGVPVVVAVEQDPDGKTWPLCLAYAKALGALRAGAIKTTFTEETETDLFGEQDVLMGGINHLCDLGFDVLTEAGYQPEIAYFEVFHELKMLVDLANEGGLNKARWSCSDTAQYGDYTSTVITEETKKRMQYQLKRIQDGSFAKEFMDDQAAGAPKFKKLQEEYSHPHLETVGPKLRAMFSWNNAEAKDKDETESFNGKIARTQVQ.

Positions 3-183 (ATIWYEKDAD…GALRAGAIKT (181 aa)) constitute a KARI N-terminal Rossmann domain. NADP(+)-binding positions include 26 to 29 (YGSQ), arginine 49, serine 52, serine 54, and 84 to 87 (DQYQ). The active site involves histidine 109. Position 135 (glycine 135) interacts with NADP(+). The 144-residue stretch at 184-327 (TFTEETETDL…PKLRAMFSWN (144 aa)) folds into the KARI C-terminal knotted domain. 4 residues coordinate Mg(2+): aspartate 192, glutamate 196, glutamate 228, and glutamate 232. Serine 253 lines the substrate pocket. The tract at residues 331-350 (AKDKDETESFNGKIARTQVQ) is disordered.

Belongs to the ketol-acid reductoisomerase family. The cofactor is Mg(2+).

It catalyses the reaction (2R)-2,3-dihydroxy-3-methylbutanoate + NADP(+) = (2S)-2-acetolactate + NADPH + H(+). The enzyme catalyses (2R,3R)-2,3-dihydroxy-3-methylpentanoate + NADP(+) = (S)-2-ethyl-2-hydroxy-3-oxobutanoate + NADPH + H(+). The protein operates within amino-acid biosynthesis; L-isoleucine biosynthesis; L-isoleucine from 2-oxobutanoate: step 2/4. It functions in the pathway amino-acid biosynthesis; L-valine biosynthesis; L-valine from pyruvate: step 2/4. Functionally, involved in the biosynthesis of branched-chain amino acids (BCAA). Catalyzes an alkyl-migration followed by a ketol-acid reduction of (S)-2-acetolactate (S2AL) to yield (R)-2,3-dihydroxy-isovalerate. In the isomerase reaction, S2AL is rearranged via a Mg-dependent methyl migration to produce 3-hydroxy-3-methyl-2-ketobutyrate (HMKB). In the reductase reaction, this 2-ketoacid undergoes a metal-dependent reduction by NADPH to yield (R)-2,3-dihydroxy-isovalerate. The polypeptide is Ketol-acid reductoisomerase (NADP(+)) 2 (Bifidobacterium longum (strain NCC 2705)).